We begin with the raw amino-acid sequence, 177 residues long: ATP synthase subunit delta (177 aa).

Belongs to the ATPase delta chain family. As to quaternary structure, F-type ATPases have 2 components, F(1) - the catalytic core - and F(0) - the membrane proton channel. F(1) has five subunits: alpha(3), beta(3), gamma(1), delta(1), epsilon(1). F(0) has three main subunits: a(1), b(2) and c(10-14). The alpha and beta chains form an alternating ring which encloses part of the gamma chain. F(1) is attached to F(0) by a central stalk formed by the gamma and epsilon chains, while a peripheral stalk is formed by the delta and b chains.

It localises to the cell inner membrane. In terms of biological role, f(1)F(0) ATP synthase produces ATP from ADP in the presence of a proton or sodium gradient. F-type ATPases consist of two structural domains, F(1) containing the extramembraneous catalytic core and F(0) containing the membrane proton channel, linked together by a central stalk and a peripheral stalk. During catalysis, ATP synthesis in the catalytic domain of F(1) is coupled via a rotary mechanism of the central stalk subunits to proton translocation. This protein is part of the stalk that links CF(0) to CF(1). It either transmits conformational changes from CF(0) to CF(1) or is implicated in proton conduction. In Glaesserella parasuis serovar 5 (strain SH0165) (Haemophilus parasuis), this protein is ATP synthase subunit delta.